A 206-amino-acid chain; its full sequence is uncharacterized protein (206 aa).

This is an uncharacterized protein from Saccharomyces cerevisiae (strain ATCC 204508 / S288c) (Baker's yeast).